The chain runs to 330 residues: Ferredoxin--NADP reductase (330 aa).

Residues Glu-35, Gln-43, Tyr-48, Val-90, Phe-123, Asp-285, and Thr-326 each coordinate FAD.

The protein belongs to the ferredoxin--NADP reductase type 2 family. Homodimer. FAD is required as a cofactor.

It carries out the reaction 2 reduced [2Fe-2S]-[ferredoxin] + NADP(+) + H(+) = 2 oxidized [2Fe-2S]-[ferredoxin] + NADPH. This Streptococcus agalactiae serotype Ia (strain ATCC 27591 / A909 / CDC SS700) protein is Ferredoxin--NADP reductase.